Consider the following 353-residue polypeptide: D-alanine--D-alanine ligase (353 aa).

Residues 141–349 form the ATP-grasp domain; it reads KAAFAAAGLP…LEELVSQLVI (209 aa). Residue 176–231 coordinates ATP; it reads EAKLKYPCFVKPANLGSSVGISKAQNRNELLIGLDKAASLDRRIVVEQGVSARELE. Mg(2+)-binding residues include Asp302, Glu316, and Asn318.

Belongs to the D-alanine--D-alanine ligase family. Mg(2+) serves as cofactor. It depends on Mn(2+) as a cofactor.

It localises to the cytoplasm. The catalysed reaction is 2 D-alanine + ATP = D-alanyl-D-alanine + ADP + phosphate + H(+). It functions in the pathway cell wall biogenesis; peptidoglycan biosynthesis. Cell wall formation. The sequence is that of D-alanine--D-alanine ligase from Prochlorococcus marinus (strain MIT 9303).